A 120-amino-acid polypeptide reads, in one-letter code: Large ribosomal subunit protein bL17 (120 aa).

The protein belongs to the bacterial ribosomal protein bL17 family. In terms of assembly, part of the 50S ribosomal subunit. Contacts protein L32.

The sequence is that of Large ribosomal subunit protein bL17 from Halalkalibacterium halodurans (strain ATCC BAA-125 / DSM 18197 / FERM 7344 / JCM 9153 / C-125) (Bacillus halodurans).